The sequence spans 850 residues: Trimethylamine-N-oxide reductase (850 aa).

Residues 1 to 39 (MKNKDSLHVSRRRFLAQLGGLTVAGMLGPSLLTPRSARA) constitute a signal peptide (tat-type signal). Position 191 (serine 191) interacts with Mo-bis(molybdopterin guanine dinucleotide).

This sequence belongs to the prokaryotic molybdopterin-containing oxidoreductase family. It depends on Mo-bis(molybdopterin guanine dinucleotide) as a cofactor. Post-translationally, predicted to be exported by the Tat system. The position of the signal peptide cleavage has not been experimentally proven.

The protein localises to the periplasm. It carries out the reaction trimethylamine + 2 Fe(III)-[cytochrome c] + H2O = trimethylamine N-oxide + 2 Fe(II)-[cytochrome c] + 3 H(+). Its function is as follows. Reduces trimethylamine-N-oxide (TMAO) into trimethylamine; an anaerobic reaction coupled to energy-yielding reactions. The polypeptide is Trimethylamine-N-oxide reductase (torA) (Salmonella typhi).